Here is a 264-residue protein sequence, read N- to C-terminus: Undecaprenyl-diphosphatase (264 aa).

8 consecutive transmembrane segments (helical) span residues 1-21 (MDLI…FLPI), 39-59 (QGLA…AVYF), 87-107 (WYLI…DDLI), 111-131 (LRST…LWVA), 144-164 (IALS…IPGT), 187-207 (FSFL…GLQL), 208-228 (VLSA…LSAV), and 244-264 (IGML…FIAV).

This sequence belongs to the UppP family.

It is found in the cell inner membrane. It catalyses the reaction di-trans,octa-cis-undecaprenyl diphosphate + H2O = di-trans,octa-cis-undecaprenyl phosphate + phosphate + H(+). In terms of biological role, catalyzes the dephosphorylation of undecaprenyl diphosphate (UPP). Confers resistance to bacitracin. This chain is Undecaprenyl-diphosphatase, found in Teredinibacter turnerae (strain ATCC 39867 / T7901).